The primary structure comprises 284 residues: 4-diphosphocytidyl-2-C-methyl-D-erythritol kinase (284 aa).

Lys14 is a catalytic residue. 98 to 108 (PMGGGIGGGSS) provides a ligand contact to ATP. Asp140 is a catalytic residue.

The protein belongs to the GHMP kinase family. IspE subfamily.

The catalysed reaction is 4-CDP-2-C-methyl-D-erythritol + ATP = 4-CDP-2-C-methyl-D-erythritol 2-phosphate + ADP + H(+). Its pathway is isoprenoid biosynthesis; isopentenyl diphosphate biosynthesis via DXP pathway; isopentenyl diphosphate from 1-deoxy-D-xylulose 5-phosphate: step 3/6. Its function is as follows. Catalyzes the phosphorylation of the position 2 hydroxy group of 4-diphosphocytidyl-2C-methyl-D-erythritol. In Shewanella woodyi (strain ATCC 51908 / MS32), this protein is 4-diphosphocytidyl-2-C-methyl-D-erythritol kinase.